The sequence spans 651 residues: Protein EXECUTER 2, chloroplastic (651 aa).

A chloroplast-targeting transit peptide spans 1–69 (MATTQPCLIG…KAPSLSCLRN (69 aa)). The UVR domain occupies 103–138 (ESVVSLLKSQLEDAVEKEDFEEAVKLKQAISEATVD). The disordered stretch occupies residues 330 to 359 (DATEELVGEGTEETNSSDDEEEVEEEENDS).

The protein localises to the plastid. The protein resides in the chloroplast. Together with EX1, enables higher plants to perceive singlet oxygen as a stress signal in plastid that activates a genetically determined nuclear stress response program which triggers a programmed cell death (PCD). This transfer of singlet oxygen-induced stress-related signals from the plastid to the nucleus that triggers genetically controlled PCD pathway is unique to photosynthetic eukaryotes and operates under mild stress conditions, impeding photosystem II (PSII) without causing photooxidative damage of the plant. The protein is Protein EXECUTER 2, chloroplastic of Arabidopsis thaliana (Mouse-ear cress).